We begin with the raw amino-acid sequence, 877 residues long: Polycomb protein Scm (877 aa).

Residues 1–57 (MSGGRDSSTSSGSNSAAPGASTNATSSASASASSTSTSASPGSTTSPASTQRQRGRP) are disordered. Low complexity predominate over residues 7-50 (SSTSSGSNSAAPGASTNATSSASASASSTSTSASPGSTTSPAST). The FCS-type zinc finger occupies 54-93 (RGRPAKRATCTWCGEGKLPLQYVLPTQTGKKEFCSETCIA). Zn(2+)-binding residues include cysteine 63, cysteine 66, cysteine 87, and cysteine 91. MBT repeat units lie at residues 175 to 273 (FDWD…LQPP) and 281 to 382 (SSWP…MQPP). Disordered regions lie at residues 535 to 621 (NSRK…SNKV), 652 to 692 (TNTN…GGSA), and 713 to 735 (ANVK…ASLP). Residue threonine 546 is modified to Phosphothreonine. Phosphoserine is present on residues serine 549 and serine 550. Positions 560–569 (QSNSATTSPS) are enriched in polar residues. Serine 585 bears the Phosphoserine mark. The segment covering 598 to 620 (ASQQNSNHSLNNNNNSASKSSNK) has biased composition (low complexity). The segment covering 724-735 (SPTTLSSSASLP) has biased composition (low complexity). An SAM domain is found at 806 to 876 (WTIEEVIQYI…KVNGRRNNLA (71 aa)).

Belongs to the SCM family. Scm associates with the PRC1 core complex containing PSC, PC, PH and Sce/RING1. Forms homotypic and heterotypic interactions. Interacts with the SAM domain of ph-p via its SAM domain in vitro. Interacts with corto in vitro.

It localises to the nucleus. Its function is as follows. Polycomb group (PcG) protein. PcG proteins act by forming multiprotein complexes, which are required to maintain the transcriptionally repressive state of homeotic genes throughout development. PcG proteins are not required to initiate repression, but to maintain it during later stages of development. They probably act via the methylation of histones, rendering chromatin heritably changed in its expressibility. This Drosophila melanogaster (Fruit fly) protein is Polycomb protein Scm.